The chain runs to 333 residues: Neuropeptides B/W receptor type 2 (333 aa).

The Extracellular portion of the chain corresponds to 1–45; it reads MQAAGHPEPLDSRGSFSLPTMGANVSQDNGTGHNATFSEPLPFLY. N-linked (GlcNAc...) asparagine glycosylation is found at Asn-24, Asn-29, and Asn-34. A helical transmembrane segment spans residues 46-69; that stretch reads VLLPAVYSGICAVGLTGNTAVILV. The Cytoplasmic portion of the chain corresponds to 70-80; the sequence is ILRAPKMKTVT. Residues 81–105 traverse the membrane as a helical segment; it reads NVFILNLAVADGLFTLVLPVNIAEH. The Extracellular segment spans residues 106–120; it reads LLQYWPFGELLCKLV. Cysteines 117 and 197 form a disulfide. Residues 121-140 form a helical membrane-spanning segment; that stretch reads LAVDHYNIFSSIYFLAVMSV. Topologically, residues 141–165 are cytoplasmic; that stretch reads DRYLVVLATVRSRHMPWRTYRGAKV. A helical transmembrane segment spans residues 166 to 185; the sequence is ASLCVWLGVTVLVLPFFSFA. Residues 186–211 are Extracellular-facing; sequence GVYSNELQVPSCGLSFPWPEQVWFKA. Residues 212–233 traverse the membrane as a helical segment; the sequence is SRVYTLVLGFVLPVCTICVLYT. Topologically, residues 234 to 257 are cytoplasmic; that stretch reads DLLRRLRAVRLRSGAKALGKARRK. Residues 258 to 282 form a helical membrane-spanning segment; that stretch reads VTVLVLVVLAVCLLCWTPFHLASVV. Residues 283 to 292 are Extracellular-facing; it reads ALTTDLPQTP. Residues 293 to 307 traverse the membrane as a helical segment; the sequence is LVISMSYVITSLSYA. The Cytoplasmic portion of the chain corresponds to 308–333; the sequence is NSCLNPFLYAFLDDNFRKNFRSILRC.

It belongs to the G-protein coupled receptor 1 family. In terms of tissue distribution, detected at high levels in caudate nucleus, hippocampus and amygdala; at moderate levels in the adult brain, thalamus, parietal cortex, pituitary gland, adrenal gland and lymph nodes.

It is found in the cell membrane. In terms of biological role, interacts specifically with a number of opioid ligands. Receptor for neuropeptides B and W, which may be involved in neuroendocrine system regulation, food intake and the organization of other signals. The chain is Neuropeptides B/W receptor type 2 (NPBWR2) from Homo sapiens (Human).